Consider the following 125-residue polypeptide: Small ribosomal subunit protein eS25 (125 aa).

A compositionally biased stretch (basic and acidic residues) spans 1–23 (MPPKDDKKKKDAGKSAKKDKDPV). Positions 1–38 (MPPKDDKKKKDAGKSAKKDKDPVNKSGGKAKKKKWSKG) are disordered. The segment covering 28 to 38 (GKAKKKKWSKG) has biased composition (basic residues). Position 43 is an N6-acetyllysine (K43). N6-acetyllysine; alternate is present on K52. K52 bears the N6-succinyllysine; alternate mark. N6-acetyllysine is present on residues K60 and K66. An N6-acetyllysine; alternate modification is found at K94. K94 bears the N6-succinyllysine; alternate mark.

The protein belongs to the eukaryotic ribosomal protein eS25 family. In terms of assembly, component of the small ribosomal subunit.

The protein localises to the cytoplasm. Its function is as follows. Component of the small ribosomal subunit. The ribosome is a large ribonucleoprotein complex responsible for the synthesis of proteins in the cell. The chain is Small ribosomal subunit protein eS25 (RPS25) from Homo sapiens (Human).